The chain runs to 380 residues: MALNLRKNHPILKIINDSLVDLPTPSNISAWWNFGSLLGICLMTQIITGLLLAMHYTADTTLAFSSVAHMCRNVQFGWLIRNLHANGASFFFICIYLHIGRGFYYGSYLNKETWNIGVILPPTLMATAFVGYVLPWGQMSFWGATVITNLFSAIPYIGQTLVEWAWGGFSVDNPTLTRFFALHFLLLFVTVGLTLVHLTFLHETGSNNPLGIPSDCDKIPFHPYYSIKDMLGFALMLILLATMALFSPNLLGDPENFTPANPLVTPPHIKPEWYFLFAYAILRSIPNKLGGVLALAASVLVLFLVPLLHKSKQRSMTFRPLLPFLFWTLVANLLILTWVGSQPVEHPFIIIGQVASFTYFTXILVLFPIASVLENKMLNL.

Transmembrane regions (helical) follow at residues 34–54 (FGSLLGICLMTQIITGLLLAM), 78–99 (WLIRNLHANGASFFFICIYLHI), 114–134 (WNIGVILPPTLMATAFVGYVL), and 179–199 (FFALHFLLLFVTVGLTLVHLT). 2 residues coordinate heme b: His84 and His98. Heme b contacts are provided by His183 and His197. His202 is an a ubiquinone binding site. 4 consecutive transmembrane segments (helical) span residues 227–247 (IKDMLGFALMLILLATMALFS), 289–309 (LGGVLALAASVLVLFLVPLLH), 321–341 (LLPFLFWTLVANLLILTWVGS), and 348–368 (FIIIGQVASFTYFTXILVLFP).

This sequence belongs to the cytochrome b family. As to quaternary structure, the cytochrome bc1 complex contains 11 subunits: 3 respiratory subunits (MT-CYB, CYC1 and UQCRFS1), 2 core proteins (UQCRC1 and UQCRC2) and 6 low-molecular weight proteins (UQCRH/QCR6, UQCRB/QCR7, UQCRQ/QCR8, UQCR10/QCR9, UQCR11/QCR10 and a cleavage product of UQCRFS1). This cytochrome bc1 complex then forms a dimer. It depends on heme b as a cofactor.

It localises to the mitochondrion inner membrane. In terms of biological role, component of the ubiquinol-cytochrome c reductase complex (complex III or cytochrome b-c1 complex) that is part of the mitochondrial respiratory chain. The b-c1 complex mediates electron transfer from ubiquinol to cytochrome c. Contributes to the generation of a proton gradient across the mitochondrial membrane that is then used for ATP synthesis. This Gymnorhina tibicen (Australian magpie) protein is Cytochrome b (MT-CYB).